Consider the following 161-residue polypeptide: Allophycocyanin alpha chain (161 aa).

N4-methylasparagine is present on asparagine 71. Residue cysteine 81 participates in (2R,3E)-phycocyanobilin binding.

The protein belongs to the phycobiliprotein family. In terms of assembly, heterodimer of an alpha and a beta chain. In terms of processing, contains one covalently linked phycocyanobilin chromophore.

It is found in the plastid. The protein resides in the cyanelle thylakoid membrane. In terms of biological role, light-harvesting photosynthetic bile pigment-protein from the phycobiliprotein complex. Allophycocyanin has a maximum absorption at approximately 650 nanometers. This chain is Allophycocyanin alpha chain (apcA), found in Cyanophora paradoxa.